A 386-amino-acid chain; its full sequence is Acyl-CoA ligase lcsD (386 aa).

The tract at residues 62–132 is SBD1; that stretch reads ELEQTLLAIQ…ELLPACKIIQ (71 aa). Residue 107 to 115 participates in ATP binding; the sequence is AVGASGISK. Positions 133-195 are SBD2; sequence GYGMTETTGV…LRSPSVVIGY (63 aa). Threonine 137 is a substrate binding site. Aspartate 216 and arginine 235 together coordinate ATP. Residues 243-245 and 313-316 contribute to the CoA site; these read RGL and HLDG. Lysine 331 serves as a coordination point for ATP. The segment at 352-386 is disordered; that stretch reads REKAANGVHKVHVNGVKRPEKMEVFDLSSDDEDDD.

This sequence belongs to the ATP-dependent AMP-binding enzyme family.

It functions in the pathway secondary metabolite biosynthesis. Its function is as follows. Acyl-CoA ligase; part of the gene cluster that mediates the biosynthesis of the lipopeptide antibiotics leucinostatins that show extensive biological activities, including antimalarial, antiviral, antibacterial, antifungal, and antitumor activities, as well as phytotoxic. Leucinostatin A contains nine amino acid residues, including the unusual amino acid 4-methyl-L-proline (MePro), 2-amino-6-hydroxy-4-methyl-8-oxodecanoic acid (AHyMeOA), 3-hydroxyleucine (HyLeu), alpha-aminoisobutyric acid (AIB), beta-Ala, a 4-methylhex-2-enoic acid at the N-terminus as well as a N1,N1-dimethylpropane-1,2-diamine (DPD) at the C-terminus. The biosynthesis of leucinostatins is probably initiated with the assembly of 4-methylhex-2-enoic acid by a reducing PKS. Two reducing polyketide synthases, lcsB and lcsC, have been identified in the cluster and it is not clear which is the one that assembles 4-methylhex-2-enoic acid since both contain KS, AT, DH, cMT, ER, KR and ACP domains. The polyketide residue might be transferred to the NRPS lcsA, mediated by two additional enzymes, the acyl-CoA ligase lcsD and the thioesterase lcsE. The linear polyketide carboxylic acid, which is released from PKS, is converted to a CoA thioester by lcsD, and then lcsE hydrolyzes the thiol bond and shuttles the polyketide intermediate to lcsA. The C domain of the first module catalyzed the condensation of 4-methylhex-2-enoic acid and MePro carried by domain A1, followed by successive condensations of nine amino acids to trigger the elongation of the linear peptide. A5 and A6 domains of lcsA are proposed to incorporate leucine, A2 AHyMeOA, and A3 incorporates HyLeu. A4, A7 and A8 incorporate AIB. The AHyMeOA in leucinostatin A activated by the A2 might be produced by the second PKS (lcsB or lcsC) present within the cluster. The MePro is probably produced via leucine cyclization and may originate from a separate pathway, independent of the cluster. Another nonproteinogenic amino acid, beta-Ala, could be produced by an aspartic acid decarboxylase also localized outside of the cluster. Two candidates are VFPBJ_01400 and VFPBJ_10476. The final peptide scaffold may be released by the NAD(P)H-dependent thioester reductase (TE) at the C-terminal region of lcsA. Transamination of the lcsA product by the transaminase lcsP may produce DPD at the C-terminus. Further hydroxylation steps performed alternatively by the cytochrome P450 monooxygenases lcsI, lcsK and lcsN then yield the non-methylated leucinostatins precursor. It is also possible that leucines can be hydroxylated prior to their incorporation into the peptide. Varying extents of methylation then lead to the formation of leucinostatins A and B. In Purpureocillium lilacinum (Paecilomyces lilacinus), this protein is Acyl-CoA ligase lcsD.